The following is a 567-amino-acid chain: Proline--tRNA ligase (567 aa).

It belongs to the class-II aminoacyl-tRNA synthetase family. ProS type 1 subfamily. As to quaternary structure, homodimer.

The protein resides in the cytoplasm. The catalysed reaction is tRNA(Pro) + L-proline + ATP = L-prolyl-tRNA(Pro) + AMP + diphosphate. In terms of biological role, catalyzes the attachment of proline to tRNA(Pro) in a two-step reaction: proline is first activated by ATP to form Pro-AMP and then transferred to the acceptor end of tRNA(Pro). As ProRS can inadvertently accommodate and process non-cognate amino acids such as alanine and cysteine, to avoid such errors it has two additional distinct editing activities against alanine. One activity is designated as 'pretransfer' editing and involves the tRNA(Pro)-independent hydrolysis of activated Ala-AMP. The other activity is designated 'posttransfer' editing and involves deacylation of mischarged Ala-tRNA(Pro). The misacylated Cys-tRNA(Pro) is not edited by ProRS. This chain is Proline--tRNA ligase, found in Geobacillus thermodenitrificans (strain NG80-2).